Reading from the N-terminus, the 461-residue chain is Asparagine--tRNA ligase (461 aa).

It belongs to the class-II aminoacyl-tRNA synthetase family. In terms of assembly, homodimer.

The protein resides in the cytoplasm. It carries out the reaction tRNA(Asn) + L-asparagine + ATP = L-asparaginyl-tRNA(Asn) + AMP + diphosphate + H(+). This chain is Asparagine--tRNA ligase, found in Nitratidesulfovibrio vulgaris (strain ATCC 29579 / DSM 644 / CCUG 34227 / NCIMB 8303 / VKM B-1760 / Hildenborough) (Desulfovibrio vulgaris).